The primary structure comprises 419 residues: Hyaluronan synthase (419 aa).

The next 5 membrane-spanning stretches (helical) occupy residues 8–28, 33–53, 318–338, 345–365, and 376–396; these read LIVL…MYLF, VGIY…LSFL, IVAL…VAIG, AIQL…IVAL, and PASF…LQPL.

It belongs to the NodC/HAS family. Mg(2+) is required as a cofactor.

It localises to the cell membrane. It catalyses the reaction [hyaluronan](n) + UDP-N-acetyl-alpha-D-glucosamine = N-acetyl-beta-D-glucosaminyl-(1-&gt;4)-[hyaluronan](n) + UDP + H(+). The catalysed reaction is N-acetyl-beta-D-glucosaminyl-(1-&gt;4)-[hyaluronan](n) + UDP-alpha-D-glucuronate = [hyaluronan](n+1) + UDP + H(+). The protein operates within glycan biosynthesis; hyaluronan biosynthesis. Its function is as follows. Glycosaminoglycan synthesis. The hyaluronic acid capsule is involved in the pathogenicity of group A Streptococci; it may be the major virulence determinant. The polypeptide is Hyaluronan synthase (hasA) (Streptococcus pyogenes serotype M6 (strain ATCC BAA-946 / MGAS10394)).